The primary structure comprises 862 residues: DNA mismatch repair protein MutS (862 aa).

604–611 provides a ligand contact to ATP; the sequence is GPNMAGKS.

The protein belongs to the DNA mismatch repair MutS family.

This protein is involved in the repair of mismatches in DNA. It is possible that it carries out the mismatch recognition step. This protein has a weak ATPase activity. The protein is DNA mismatch repair protein MutS of Brevibacillus brevis (strain 47 / JCM 6285 / NBRC 100599).